The following is a 1377-amino-acid chain: Carboxypeptidase D (1377 aa).

Residues 1 to 37 (MASGRDERPPWRLGRLRLLPPPPLLLLLLLLRSSAQA) form the signal peptide. At 38–1296 (AHIKKAEATT…DNRIFGLPRE (1259 aa)) the chain is on the extracellular side. Residues 62-379 (HYYHEAALGE…ESLITLIEKV (318 aa)) enclose the Peptidase M14 1 domain. Zn(2+) contacts are provided by histidine 138 and glutamate 141. Residues 161–163 (RGD) carry the Cell attachment site motif. 2 N-linked (GlcNAc...) asparagine glycosylation sites follow: asparagine 171 and asparagine 216. The tract at residues 188–231 (RAREGDCGLGDSGPPGTSGRDNSRGRDLNRSFPDQFSTGEPPSL) is disordered. Histidine 256 contributes to the Zn(2+) binding site. A Phosphotyrosine modification is found at tyrosine 264. Residue serine 269 is modified to Phosphoserine. The Proton donor/acceptor role is filled by glutamate 349. 4 N-linked (GlcNAc...) asparagine glycosylation sites follow: asparagine 398, asparagine 409, asparagine 428, and asparagine 521. A Peptidase M14 2 domain is found at 501–791 (HHHHFPDMEI…RSLIQFMKQV (291 aa)). Residues histidine 563 and glutamate 566 each contribute to the Zn(2+) site. Asparagine 625 is a glycosylation site (N-linked (GlcNAc...) asparagine). Histidine 670 is a binding site for Zn(2+). The active-site Proton donor/acceptor is the glutamate 761. Residues asparagine 810, asparagine 854, asparagine 866, asparagine 878, asparagine 952, and asparagine 975 are each glycosylated (N-linked (GlcNAc...) asparagine). Positions 874–898 (ADANNESKKGRGHSTSTDDTSDPTS) are disordered. A Peptidase M14 3 domain is found at 929-1208 (RYHSYKDLSE…KSLLSMLVEV (280 aa)). The segment covering 1038–1047 (RERAQEKDCT) has biased composition (basic and acidic residues). Residues 1038–1064 (RERAQEKDCTSKTGHTNAHGKDLDTDF) form a disordered region. Asparagine 1067 and asparagine 1139 each carry an N-linked (GlcNAc...) asparagine glycan. The chain crosses the membrane as a helical span at residues 1297 to 1317 (LVVTVSGATMSALILTACIIW). S-palmitoyl cysteine attachment occurs at residues cysteine 1314, cysteine 1318, and cysteine 1320. Topologically, residues 1318 to 1377 (CICSIKSNRHKDGFHRLRQHHDEYEDEIRMMSTGSKKSLLSHEFQDETDTEEETLYSSKH) are cytoplasmic. A phosphoserine mark is found at serine 1355 and serine 1358. Positions 1356–1377 (LLSHEFQDETDTEEETLYSSKH) are disordered. A phosphothreonine mark is found at threonine 1365 and threonine 1367.

It belongs to the peptidase M14 family. The cofactor is Zn(2+).

The protein resides in the cell membrane. It catalyses the reaction Releases C-terminal Arg and Lys from polypeptides.. The polypeptide is Carboxypeptidase D (Cpd) (Mus musculus (Mouse)).